The chain runs to 96 residues: Co-chaperonin GroES (96 aa).

It belongs to the GroES chaperonin family. As to quaternary structure, heptamer of 7 subunits arranged in a ring. Interacts with the chaperonin GroEL.

The protein localises to the cytoplasm. Its function is as follows. Together with the chaperonin GroEL, plays an essential role in assisting protein folding. The GroEL-GroES system forms a nano-cage that allows encapsulation of the non-native substrate proteins and provides a physical environment optimized to promote and accelerate protein folding. GroES binds to the apical surface of the GroEL ring, thereby capping the opening of the GroEL channel. This chain is Co-chaperonin GroES, found in Neisseria gonorrhoeae (strain ATCC 700825 / FA 1090).